A 493-amino-acid chain; its full sequence is 3-octaprenyl-4-hydroxybenzoate carboxy-lyase (493 aa).

Asn172 contacts Mn(2+). Prenylated FMN contacts are provided by residues 175–177, 189–191, and 194–195; these read IYR, RWL, and RG. A Mn(2+)-binding site is contributed by Glu238. The Proton donor role is filled by Asp287.

The protein belongs to the UbiD family. As to quaternary structure, homohexamer. Prenylated FMN serves as cofactor. It depends on Mn(2+) as a cofactor.

Its subcellular location is the cell membrane. It catalyses the reaction a 4-hydroxy-3-(all-trans-polyprenyl)benzoate + H(+) = a 2-(all-trans-polyprenyl)phenol + CO2. It functions in the pathway cofactor biosynthesis; ubiquinone biosynthesis. Its function is as follows. Catalyzes the decarboxylation of 3-octaprenyl-4-hydroxy benzoate to 2-octaprenylphenol, an intermediate step in ubiquinone biosynthesis. The chain is 3-octaprenyl-4-hydroxybenzoate carboxy-lyase from Cellvibrio japonicus (strain Ueda107) (Pseudomonas fluorescens subsp. cellulosa).